Here is a 153-residue protein sequence, read N- to C-terminus: MKCPFCNNISTNVKDSRSIEDDMLIRRRRVCPVCNSRFTTTEKLLLRSLMVIKKNGGLEQFDKKKLLSSILIATKKRPVSHDKINMMVNNIFYELEGKKDNAIPTDVIGKMVMDNLFKLDKVAYVRFASVYMNFKNINDFSNIIAKIINENNL.

The segment at 3 to 34 (CPFCNNISTNVKDSRSIEDDMLIRRRRVCPVC) is a zinc-finger region. An ATP-cone domain is found at 49–139 (LMVIKKNGGL…VYMNFKNIND (91 aa)).

It belongs to the NrdR family. It depends on Zn(2+) as a cofactor.

Negatively regulates transcription of bacterial ribonucleotide reductase nrd genes and operons by binding to NrdR-boxes. The polypeptide is Transcriptional repressor NrdR (Ehrlichia ruminantium (strain Gardel)).